We begin with the raw amino-acid sequence, 302 residues long: MTTEDTFETAERAAAIAKAAALIESLPWLKTFHDRIIVVKFGGNAMVSEELQRTFAEDMVYLRYAGLLPVIVHGGGPQISAMLDRLGIQSEFRGGYRVTTPEAMEVVRMVLTGQINRDIVAAINKHGPLAAGLSGEDAALFQGRKRGAVVDGEAVDLGLVGDVIGVNPEAVLAQIDAGRIPVVSSIAPDIDEPGQSLNVNADAAAAALAVALRAAKLVILTDVAGLYSDWPNRDSLLSKITARELRELLPGLESGMIPKMAACLAAVDGGVEKAEIIDGRIEHSILLEVFTQSGIGTEVAPV.

Residues 75 to 76, arginine 97, and asparagine 198 contribute to the substrate site; that span reads GG.

This sequence belongs to the acetylglutamate kinase family. ArgB subfamily.

It localises to the cytoplasm. It carries out the reaction N-acetyl-L-glutamate + ATP = N-acetyl-L-glutamyl 5-phosphate + ADP. Its pathway is amino-acid biosynthesis; L-arginine biosynthesis; N(2)-acetyl-L-ornithine from L-glutamate: step 2/4. Catalyzes the ATP-dependent phosphorylation of N-acetyl-L-glutamate. The sequence is that of Acetylglutamate kinase from Leifsonia xyli subsp. xyli (strain CTCB07).